The sequence spans 83 residues: Putative protein T-ENOL (83 aa).

Residues 1–33 (MASTPMGNEGEKKSSWPSQAAPSLRGGPASLSR) are disordered.

The protein is Putative protein T-ENOL of Homo sapiens (Human).